We begin with the raw amino-acid sequence, 454 residues long: tRNA-2-methylthio-N(6)-dimethylallyladenosine synthase (454 aa).

Residues 11 to 128 (KKLYIQTHGC…LPEMIETPRE (118 aa)) form the MTTase N-terminal domain. [4Fe-4S] cluster is bound by residues Cys20, Cys57, Cys91, Cys165, Cys169, and Cys172. The Radical SAM core domain maps to 151–382 (EADGATAFVS…QTRIIQQAQE (232 aa)). The TRAM domain maps to 385–449 (RRMVGNTERV…PNSLRGVLLG (65 aa)).

It belongs to the methylthiotransferase family. MiaB subfamily. As to quaternary structure, monomer. [4Fe-4S] cluster is required as a cofactor.

The protein localises to the cytoplasm. The enzyme catalyses N(6)-dimethylallyladenosine(37) in tRNA + (sulfur carrier)-SH + AH2 + 2 S-adenosyl-L-methionine = 2-methylsulfanyl-N(6)-dimethylallyladenosine(37) in tRNA + (sulfur carrier)-H + 5'-deoxyadenosine + L-methionine + A + S-adenosyl-L-homocysteine + 2 H(+). Catalyzes the methylthiolation of N6-(dimethylallyl)adenosine (i(6)A), leading to the formation of 2-methylthio-N6-(dimethylallyl)adenosine (ms(2)i(6)A) at position 37 in tRNAs that read codons beginning with uridine. The protein is tRNA-2-methylthio-N(6)-dimethylallyladenosine synthase of Saccharophagus degradans (strain 2-40 / ATCC 43961 / DSM 17024).